The sequence spans 272 residues: Orotidine 5'-phosphate decarboxylase (272 aa).

Lys95 acts as the Proton donor in catalysis.

The protein belongs to the OMP decarboxylase family. Type 2 subfamily.

The catalysed reaction is orotidine 5'-phosphate + H(+) = UMP + CO2. It participates in pyrimidine metabolism; UMP biosynthesis via de novo pathway; UMP from orotate: step 2/2. The chain is Orotidine 5'-phosphate decarboxylase from Bordetella avium (strain 197N).